A 253-amino-acid polypeptide reads, in one-letter code: Tropomyosin-1 (253 aa).

Residues 7-253 (VNKLVRLQGK…MDDVGDDDTQ (247 aa)) adopt a coiled-coil conformation.

It belongs to the tropomyosin family. In terms of assembly, homodimer.

In terms of biological role, tropomyosin, in association with the troponin complex, plays a central role in the calcium dependent regulation of muscle contraction. The polypeptide is Tropomyosin-1 (TROP1) (Hydra vulgaris (Hydra)).